Consider the following 329-residue polypeptide: Malate dehydrogenase (329 aa).

12 to 18 provides a ligand contact to NAD(+); that stretch reads GAAGQIG. Substrate-binding residues include Arg-95 and Arg-101. NAD(+)-binding positions include Asn-108, Gln-115, and 132 to 134; that span reads VGN. Substrate is bound by residues Asn-134 and Arg-165. His-190 acts as the Proton acceptor in catalysis.

Belongs to the LDH/MDH superfamily. MDH type 2 family.

It carries out the reaction (S)-malate + NAD(+) = oxaloacetate + NADH + H(+). Its function is as follows. Catalyzes the reversible oxidation of malate to oxaloacetate. The sequence is that of Malate dehydrogenase from Bordetella bronchiseptica (strain ATCC BAA-588 / NCTC 13252 / RB50) (Alcaligenes bronchisepticus).